Here is a 766-residue protein sequence, read N- to C-terminus: Probable serine/threonine-protein kinase KKQ8 (766 aa).

Disordered regions lie at residues 1–165 (MPEH…DTSS), 201–240 (GHYA…AAQL), 277–297 (SDAN…LDLP), 362–384 (TRSH…DDPS), and 417–437 (AAKN…AGVQ). Positions 14-25 (RSLSLGSSMRSL) are enriched in low complexity. The span at 49 to 64 (VDIRVDTASASREHTP) shows a compositional bias: basic and acidic residues. The segment covering 94-120 (LTPTNSNPQSKSGSPVSQNTSQESLIT) has biased composition (polar residues). Residues 127 to 137 (EDYRPSKDSRR) are compositionally biased toward basic and acidic residues. Polar residues-rich tracts occupy residues 140-165 (RNAS…DTSS) and 214-223 (PTSSRVPSRS). Over residues 288–297 (SKNDGHLDLP) the composition is skewed to basic and acidic residues. A compositionally biased stretch (acidic residues) spans 372–382 (DSSDDDEELDD). Residues 419–430 (KNKHNQSSKHRT) are compositionally biased toward basic residues. The region spanning 449-752 (GKCVAVVGHG…IDKLLQTGWM (304 aa)) is the Protein kinase domain. ATP-binding positions include 455–463 (VGHGAYGVV) and K493. Catalysis depends on D603, which acts as the Proton acceptor.

It belongs to the protein kinase superfamily. CAMK Ser/Thr protein kinase family. NPR/HAL subfamily. HAL5 sub-subfamily.

It is found in the cytoplasm. It catalyses the reaction L-seryl-[protein] + ATP = O-phospho-L-seryl-[protein] + ADP + H(+). The catalysed reaction is L-threonyl-[protein] + ATP = O-phospho-L-threonyl-[protein] + ADP + H(+). This Candida glabrata (strain ATCC 2001 / BCRC 20586 / JCM 3761 / NBRC 0622 / NRRL Y-65 / CBS 138) (Yeast) protein is Probable serine/threonine-protein kinase KKQ8 (KKQ8).